Reading from the N-terminus, the 507-residue chain is ATP synthase subunit alpha, chloroplastic (507 aa).

Residue 170–177 participates in ATP binding; sequence GDRQTGKT.

This sequence belongs to the ATPase alpha/beta chains family. F-type ATPases have 2 components, CF(1) - the catalytic core - and CF(0) - the membrane proton channel. CF(1) has five subunits: alpha(3), beta(3), gamma(1), delta(1), epsilon(1). CF(0) has four main subunits: a, b, b' and c.

The protein localises to the plastid. It is found in the chloroplast thylakoid membrane. It carries out the reaction ATP + H2O + 4 H(+)(in) = ADP + phosphate + 5 H(+)(out). Its function is as follows. Produces ATP from ADP in the presence of a proton gradient across the membrane. The alpha chain is a regulatory subunit. The polypeptide is ATP synthase subunit alpha, chloroplastic (Buxus microphylla (Littleleaf boxwood)).